A 432-amino-acid polypeptide reads, in one-letter code: Adenylosuccinate synthetase (432 aa).

Residues 13–19 (GDEGKGK) and 41–43 (GHT) contribute to the GTP site. Asp-14 serves as the catalytic Proton acceptor. Mg(2+) contacts are provided by Asp-14 and Gly-41. IMP-binding positions include 14-17 (DEGK), 39-42 (NAGH), Thr-130, Arg-144, Gln-225, Thr-240, and Arg-304. Residue His-42 is the Proton donor of the active site. Position 300–306 (300–306 (ATTGRRR)) interacts with substrate. GTP contacts are provided by residues Arg-306, 332–334 (KLD), and 415–417 (STG).

The protein belongs to the adenylosuccinate synthetase family. Homodimer. It depends on Mg(2+) as a cofactor.

The protein localises to the cytoplasm. The enzyme catalyses IMP + L-aspartate + GTP = N(6)-(1,2-dicarboxyethyl)-AMP + GDP + phosphate + 2 H(+). The protein operates within purine metabolism; AMP biosynthesis via de novo pathway; AMP from IMP: step 1/2. Plays an important role in the de novo pathway of purine nucleotide biosynthesis. Catalyzes the first committed step in the biosynthesis of AMP from IMP. In Salmonella choleraesuis (strain SC-B67), this protein is Adenylosuccinate synthetase.